The sequence spans 368 residues: Nicotinate-nucleotide--dimethylbenzimidazole phosphoribosyltransferase (368 aa).

The Proton acceptor role is filled by E314. The interval 344–368 is disordered; the sequence is DRADGADNSADSGASAGTVASDPTV. The segment covering 349-360 has biased composition (low complexity); that stretch reads ADNSADSGASAG.

Belongs to the CobT family.

It carries out the reaction 5,6-dimethylbenzimidazole + nicotinate beta-D-ribonucleotide = alpha-ribazole 5'-phosphate + nicotinate + H(+). The protein operates within nucleoside biosynthesis; alpha-ribazole biosynthesis; alpha-ribazole from 5,6-dimethylbenzimidazole: step 1/2. In terms of biological role, catalyzes the synthesis of alpha-ribazole-5'-phosphate from nicotinate mononucleotide (NAMN) and 5,6-dimethylbenzimidazole (DMB). This Corynebacterium efficiens (strain DSM 44549 / YS-314 / AJ 12310 / JCM 11189 / NBRC 100395) protein is Nicotinate-nucleotide--dimethylbenzimidazole phosphoribosyltransferase.